The chain runs to 706 residues: MSCVHNNTSFPVQIEAYLKEVFEKYKELQESKDTSLTARFARVLKYYQFLIYSAFSDPKFGIGQGENTRGLLIYHQMGMGKTILSLSLAISLSHIYNPILIAPKSLHSNFQQSLLKLIKLLYPETTDHSKELQKISRRFRFVSLDAYNMGQQIIKAGGSLNGCLLIVDEAHNLFRGIINSANDKTNARQLYNNIMQAKNIRILFLTGTPCSKDPFEMVPCFNMLSGRILLPLHYERFYTAYVNKTTNSPLNADKLLNRLVGMISYAGNQNELNKLFPTELPLIIEKVEMSPEQYRQYLLARDVENAEKHASSGMYEKMNTAALCLPGSEQESGSSYYVRSRMISIFASEMLTVKEDEKLSEAVQQLPKEAFTENSSPKIACMLKNIKTSPGPVLIYSQFVELGLHVVARFLEIEGYQCLQPLKVLEEGHNTILLHKDGKDLMVKNFAEDEPTHTLVLSSKITRFTLITGKILSKERDMIQQLWNSPLNIHGEVIKILLVSKTGAEGLDLKYGRQVHILEPYWDKAREDQVKARIIRIGSHDALPPEEKTVQPFLYIAVANQKMFYSIPEGSQEQKTIDERFHERGLEKSHLNSAFRDLLKRAAIECAFNGESGCLMCQPTNALLFHENFERDLRLPNPCQPLVKTEVKAYSISYEGKQFFYQKNKEVGLGYTFYEYNPIIKAYIEIKPSNPLYIKLIKHVQAGTTV.

The Helicase ATP-binding domain maps to 62–227 (IGQGENTRGL…VPCFNMLSGR (166 aa)). ATP is bound at residue 75–82 (HQMGMGKT). The DEAH box signature appears at 168–171 (DEAH). The region spanning 417–599 (QCLQPLKVLE…HLNSAFRDLL (183 aa)) is the Helicase C-terminal domain.

Belongs to the DEAD box helicase family. DEAH subfamily. Part of the viral DNA-directed RNA polymerase that consists of 8 polII-like subunits (RPB1, RPB2, RPB3, RPB5, RPB6, RPB7, RPB9, RPB10), a capping enzyme and a termination factor.

It localises to the virion. In terms of biological role, putative DNA-dependent ATPase required for providing the needed energy to achieve the termination of early transcripts. The polypeptide is Termination factor NPH-I homolog (Ornithodoros (relapsing fever ticks)).